Reading from the N-terminus, the 347-residue chain is NADH-ubiquinone oxidoreductase chain 2 (347 aa).

Transmembrane regions (helical) follow at residues 3-23 (PPIL…VMLS), 25-45 (HWLL…PVLM), 66-86 (ASML…QWVV), 96-116 (IMMT…FWVP), 122-142 (ITLT…MSVL), 149-169 (INTN…GWGG), 178-198 (IMAY…IYNP), 201-221 (MILN…LFML), 237-257 (FPLI…LPPL), 274-294 (NMII…YFYL), and 323-343 (TILL…TPML).

Belongs to the complex I subunit 2 family. As to quaternary structure, core subunit of respiratory chain NADH dehydrogenase (Complex I) which is composed of 45 different subunits. Interacts with TMEM242.

It is found in the mitochondrion inner membrane. It carries out the reaction a ubiquinone + NADH + 5 H(+)(in) = a ubiquinol + NAD(+) + 4 H(+)(out). Functionally, core subunit of the mitochondrial membrane respiratory chain NADH dehydrogenase (Complex I) which catalyzes electron transfer from NADH through the respiratory chain, using ubiquinone as an electron acceptor. Essential for the catalytic activity and assembly of complex I. This Canis rufus (Red wolf) protein is NADH-ubiquinone oxidoreductase chain 2.